The following is an 848-amino-acid chain: Trimethylamine-N-oxide reductase 1 (848 aa).

Residues 1-39 constitute a signal peptide (tat-type signal); that stretch reads MNNNDLFQASRRRFLAQLGGLTVAGMLGTSLLTPRRATA. Residue serine 191 participates in Mo-bis(molybdopterin guanine dinucleotide) binding.

Belongs to the prokaryotic molybdopterin-containing oxidoreductase family. It depends on Mo-bis(molybdopterin guanine dinucleotide) as a cofactor. Predicted to be exported by the Tat system. The position of the signal peptide cleavage has not been experimentally proven.

The protein resides in the periplasm. The catalysed reaction is trimethylamine + 2 Fe(III)-[cytochrome c] + H2O = trimethylamine N-oxide + 2 Fe(II)-[cytochrome c] + 3 H(+). Its function is as follows. Reduces trimethylamine-N-oxide (TMAO) into trimethylamine; an anaerobic reaction coupled to energy-yielding reactions. In Escherichia coli O6:H1 (strain CFT073 / ATCC 700928 / UPEC), this protein is Trimethylamine-N-oxide reductase 1 (torA).